The following is a 218-amino-acid chain: Mediator of RNA polymerase II transcription subunit 20 (218 aa).

Belongs to the Mediator complex subunit 20 family. As to quaternary structure, component of the Mediator complex.

It localises to the nucleus. Its function is as follows. Component of the Mediator complex, a coactivator involved in the regulated transcription of nearly all RNA polymerase II-dependent genes. Mediator functions as a bridge to convey information from gene-specific regulatory proteins to the basal RNA polymerase II transcription machinery. Mediator is recruited to promoters by direct interactions with regulatory proteins and serves as a scaffold for the assembly of a functional preinitiation complex with RNA polymerase II and the general transcription factors. In Anopheles gambiae (African malaria mosquito), this protein is Mediator of RNA polymerase II transcription subunit 20 (MED20).